The chain runs to 245 residues: Transcriptional regulatory protein YpdB (245 aa).

One can recognise a Response regulatory domain in the interval 2–116 (KVIIVEDEFL…RITGMLQKLE (115 aa)). At D53 the chain carries 4-aspartylphosphate. An HTH LytTR-type domain is found at 140–245 (INLVKDERII…VKEFRQLMHL (106 aa)).

Post-translationally, phosphorylated by YpdA.

The protein localises to the cytoplasm. In terms of biological role, member of the two-component regulatory system YpdA/YpdB. YpdB regulates expression of yhjX by binding to its promoter region. This chain is Transcriptional regulatory protein YpdB (ypdB), found in Escherichia coli O6:H1 (strain CFT073 / ATCC 700928 / UPEC).